The chain runs to 136 residues: Large ribosomal subunit protein uL22 (136 aa).

This sequence belongs to the universal ribosomal protein uL22 family. Part of the 50S ribosomal subunit.

Its function is as follows. This protein binds specifically to 23S rRNA; its binding is stimulated by other ribosomal proteins, e.g. L4, L17, and L20. It is important during the early stages of 50S assembly. It makes multiple contacts with different domains of the 23S rRNA in the assembled 50S subunit and ribosome. Functionally, the globular domain of the protein is located near the polypeptide exit tunnel on the outside of the subunit, while an extended beta-hairpin is found that lines the wall of the exit tunnel in the center of the 70S ribosome. In Bacteroides thetaiotaomicron (strain ATCC 29148 / DSM 2079 / JCM 5827 / CCUG 10774 / NCTC 10582 / VPI-5482 / E50), this protein is Large ribosomal subunit protein uL22.